A 515-amino-acid polypeptide reads, in one-letter code: N-acetylglucosamine-1-phosphodiester alpha-N-acetylglucosaminidase (515 aa).

Residues Met-1–Gly-25 form the signal peptide. Residues Leu-26–Arg-49 constitute a propeptide, removed in mature form. Residues Asp-50–Thr-448 lie on the Lumenal side of the membrane. 5 disulfide bridges follow: Cys-115-Cys-148, Cys-132-Cys-323, Cys-307-Cys-314, Cys-362-Cys-373, and Cys-380-Cys-389. Asn-208, Asn-214, and Asn-296 each carry an N-linked (GlcNAc...) asparagine glycan. The EGF-like domain occupies Asp-358–Ser-390. N-linked (GlcNAc...) asparagine glycans are attached at residues Asn-366, Asn-388, and Asn-420. The chain crosses the membrane as a helical span at residues Ala-449–Leu-469. Over Ser-470 to Asp-515 the chain is Cytoplasmic. The segment at Tyr-486–Glu-493 is mediates the interaction with AP4M1. Positions Tyr-488–Leu-491 match the Tyrosine-based internalization motif motif. The short motif at Asn-511–Asp-515 is the NPF internalization motif element.

As to quaternary structure, homotetramer arranged as two disulfide-linked homodimers. Interacts with AP4M1. The precursor is cleaved and activated in the trans-Golgi network by a furin endopeptidase. Isoform 2 may be brain-specific.

The protein resides in the golgi apparatus. It localises to the golgi stack membrane. It is found in the trans-Golgi network. It catalyses the reaction N(4)-[6-(N-acetyl-alpha-D-glucosaminyl-1-phospho)-alpha-D-mannosyl-(1-&gt;2)-alpha-D-mannosyl-(glycan)]-L-asparaginyl-[protein] + H2O = N(4)-[6-phospho-alpha-D-mannosyl-(1-&gt;2)-alpha-D-mannosyl-(glycan)]-L-asparaginyl-[protein] + N-acetyl-D-glucosamine + H(+). The protein operates within protein modification; protein glycosylation. In terms of biological role, catalyzes the second step in the formation of the mannose 6-phosphate targeting signal on lysosomal enzyme oligosaccharides by removing GlcNAc residues from GlcNAc-alpha-P-mannose moieties, which are formed in the first step. Also hydrolyzes UDP-GlcNAc, a sugar donor for Golgi N-acetylglucosaminyltransferases. In Homo sapiens (Human), this protein is N-acetylglucosamine-1-phosphodiester alpha-N-acetylglucosaminidase (NAGPA).